Here is a 470-residue protein sequence, read N- to C-terminus: UTP--glucose-1-phosphate uridylyltransferase 1 (470 aa).

Ala2 carries the post-translational modification N-acetylalanine. UTP is bound by residues 86–89 (LNGG), Lys100, Gln163, and Gly192. Position 88-89 (88-89 (GG)) interacts with substrate. Residues His193 and 221–223 (NSD) contribute to the substrate site. Residues Asp223 and Lys361 each contribute to the UTP site.

Belongs to the UDPGP type 1 family. In terms of tissue distribution, expressed in roots, rosette leaves, cauline leaves, stems, flowers and siliques.

The protein resides in the cytoplasm. It catalyses the reaction alpha-D-glucose 1-phosphate + UTP + H(+) = UDP-alpha-D-glucose + diphosphate. Its function is as follows. Converts glucose 1-phosphate to UDP-glucose, which is the major glycosyl donor for polysaccharides. Acts redundantly with UGP2 and is essential for the synthesis of sucrose, starch and cell wall, and callose deposition. Involved in the regulation of the programmed cell death (PCD) induced by the fungal toxin fumonisin B1 (FB1). The chain is UTP--glucose-1-phosphate uridylyltransferase 1 from Arabidopsis thaliana (Mouse-ear cress).